The chain runs to 248 residues: PF03932 family protein CutC (248 aa).

It belongs to the CutC family. Homodimer.

It is found in the cytoplasm. The chain is PF03932 family protein CutC from Escherichia coli O45:K1 (strain S88 / ExPEC).